The sequence spans 337 residues: WRKY transcription factor 23 (337 aa).

A disordered region spans residues 100-160; sequence INPPATPNSS…KNNQKRQREA (61 aa). Low complexity predominate over residues 106–118; sequence PNSSSISSASSEA. The segment covering 142–155 has biased composition (basic residues); the sequence is HTKKQLKAKKNNQK. Positions 168 to 233 form a DNA-binding region, WRKY; the sequence is SEVDHLEDGY…YEGQHTHISP (66 aa).

The protein belongs to the WRKY group II-c family.

The protein localises to the nucleus. Functionally, transcription factor. Interacts specifically with the W box (5'-(T)TGAC[CT]-3'), a frequently occurring elicitor-responsive cis-acting element. This Arabidopsis thaliana (Mouse-ear cress) protein is WRKY transcription factor 23 (WRKY23).